Here is a 394-residue protein sequence, read N- to C-terminus: Ceramide glucosyltransferase (394 aa).

The Lumenal portion of the chain corresponds to 1–10 (MAVLDLALQG). A helical transmembrane segment spans residues 11 to 32 (LAIFGCVLFFVLWFMHFLSIVY). Topologically, residues 33 to 195 (TRLHLNKKVS…QVYFGTSHPR (163 aa)) are cytoplasmic. A short sequence motif (D1) is located at residue aspartate 92. Position 144 (aspartate 144) is a short sequence motif, D2. Residues 196–215 (SYISANVTGFKCVTGMSCLM) traverse the membrane as a helical segment. Over 216–287 (RKEVLDQAGG…KLRINMLPAT (72 aa)) the chain is Lumenal. Residue aspartate 236 is a short sequence motif, D3. Catalysis depends on aspartate 236, which acts as the Proton acceptor. The (Q/R)XXRW motif lies at 272–276 (RMIRW). A helical transmembrane segment spans residues 288 to 304 (IICEPISECFVASLIIG). The Cytoplasmic segment spans residues 305–309 (WAAHH). A helical membrane pass occupies residues 310–328 (IFRWDIMVFFMCHCLAWFI). The Lumenal portion of the chain corresponds to 329 to 348 (FDYIQLRGVQGGPLNFSKLD). A helical transmembrane segment spans residues 349-369 (YAVAWFIRESMTIYIFLSALW). At 370-394 (DPTISWRTGRYRLRCGGTAEEILDV) the chain is on the cytoplasmic side.

Belongs to the glycosyltransferase 2 family.

The protein resides in the golgi apparatus membrane. It carries out the reaction an N-acylsphing-4-enine + UDP-alpha-D-glucose = a beta-D-glucosyl-(1&lt;-&gt;1')-N-acylsphing-4-enine + UDP + H(+). It catalyses the reaction UDP-alpha-D-xylose + an N-acylsphing-4-enine = a beta-D-xylosyl-(1&lt;-&gt;1')-N-acylsphing-4-enine + UDP + H(+). The catalysed reaction is N-(9Z-octadecenoyl)-sphing-4-enine + UDP-alpha-D-xylose = beta-D-xylosyl-(1&lt;-&gt;1')-N-(9Z-octadecenoyl)-sphing-4-enine + UDP + H(+). It participates in lipid metabolism; sphingolipid metabolism. In terms of biological role, participates in the initial step of the glucosylceramide-based glycosphingolipid/GSL synthetic pathway at the cytosolic surface of the Golgi. Catalyzes the transfer of glucose from UDP-glucose to ceramide to produce glucosylceramide/GlcCer (such as beta-D-glucosyl-(1&lt;-&gt;1')-N-acylsphing-4-enine). Glucosylceramide is the core component of glycosphingolipids/GSLs, amphipathic molecules consisting of a ceramide lipid moiety embedded in the outer leaflet of the membrane, linked to one of hundreds of different externally oriented oligosaccharide structures. Glycosphingolipids are essential components of membrane microdomains that mediate membrane trafficking and signal transduction. They are implicated in many fundamental cellular processes, including growth, differentiation, migration, morphogenesis, cell-to-cell and cell-to-matrix interactions. Catalyzes the synthesis of xylosylceramide/XylCer (such as beta-D-xylosyl-(1&lt;-&gt;1')-N-acylsphing-4-enine) using UDP-Xyl as xylose donor. The polypeptide is Ceramide glucosyltransferase (ugcg) (Xenopus tropicalis (Western clawed frog)).